We begin with the raw amino-acid sequence, 256 residues long: Indole-3-glycerol phosphate synthase (256 aa).

Belongs to the TrpC family.

The enzyme catalyses 1-(2-carboxyphenylamino)-1-deoxy-D-ribulose 5-phosphate + H(+) = (1S,2R)-1-C-(indol-3-yl)glycerol 3-phosphate + CO2 + H2O. It functions in the pathway amino-acid biosynthesis; L-tryptophan biosynthesis; L-tryptophan from chorismate: step 4/5. The protein is Indole-3-glycerol phosphate synthase of Pelodictyon phaeoclathratiforme (strain DSM 5477 / BU-1).